The following is a 351-amino-acid chain: Nicotinate-nucleotide--dimethylbenzimidazole phosphoribosyltransferase (351 aa).

Catalysis depends on E317, which acts as the Proton acceptor.

Belongs to the CobT family.

The enzyme catalyses 5,6-dimethylbenzimidazole + nicotinate beta-D-ribonucleotide = alpha-ribazole 5'-phosphate + nicotinate + H(+). Its pathway is nucleoside biosynthesis; alpha-ribazole biosynthesis; alpha-ribazole from 5,6-dimethylbenzimidazole: step 1/2. Functionally, catalyzes the synthesis of alpha-ribazole-5'-phosphate from nicotinate mononucleotide (NAMN) and 5,6-dimethylbenzimidazole (DMB). In Bradyrhizobium sp. (strain ORS 278), this protein is Nicotinate-nucleotide--dimethylbenzimidazole phosphoribosyltransferase.